Here is a 232-residue protein sequence, read N- to C-terminus: Orotate phosphoribosyltransferase (232 aa).

5-phospho-alpha-D-ribose 1-diphosphate-binding positions include arginine 107, lysine 108, lysine 111, and 133-141 (EDLTTDGGS). Orotate is bound at residue threonine 137.

It belongs to the purine/pyrimidine phosphoribosyltransferase family. PyrE subfamily. Homodimer. Requires Mg(2+) as cofactor.

It catalyses the reaction orotidine 5'-phosphate + diphosphate = orotate + 5-phospho-alpha-D-ribose 1-diphosphate. It participates in pyrimidine metabolism; UMP biosynthesis via de novo pathway; UMP from orotate: step 1/2. Its function is as follows. Catalyzes the transfer of a ribosyl phosphate group from 5-phosphoribose 1-diphosphate to orotate, leading to the formation of orotidine monophosphate (OMP). This chain is Orotate phosphoribosyltransferase, found in Cereibacter sphaeroides (strain ATCC 17025 / ATH 2.4.3) (Rhodobacter sphaeroides).